The following is a 754-amino-acid chain: Polycomb protein mes-3 (754 aa).

Residues 1–83 are disordered; the sequence is MTPATAEVKV…PTKLENIQKT (83 aa). Basic and acidic residues predominate over residues 31–40; the sequence is ARREEEKENL. Low complexity predominate over residues 51–61; sequence SSEAGSSRESS.

Forms a heterotrimeric complex with the Polycomb proteins mes-2 and mes-3. Does not interact with mes-4. Interacts with nyfa-1. In adults, it is predominantly expressed in the germline, and weakly expressed in intestinal cells.

It localises to the nucleus. Its function is as follows. Component of a Polycomb group (PcG) complex. PcG proteins act by forming multiprotein complexes, which are required to maintain the transcriptionally repressive state of homeotic genes throughout development. In association with the nfya-1-NF-Y complex, may play a role in repressing the expression of the homeobox protein egl-5 in tissues such as the head. PcG proteins are not required to initiate repression, but to maintain it during later stages of development. The mes-2/mes-3/mes-6 complex may participate in the global inactivation of the X chromosomes in germline cells. The complex may act via methylation of histone H3 'Lys-27', rendering chromatin heritably changed in its expressibility. This complex is required to exclude mes-4 from the inactivated X-chromosomes in germline cells. The polypeptide is Polycomb protein mes-3 (Caenorhabditis elegans).